A 96-amino-acid chain; its full sequence is Probable quinol oxidase subunit 4 (96 aa).

A run of 3 helical transmembrane segments spans residues 8 to 28 (TVGF…TLYT), 36 to 56 (ITII…MFMH), and 68 to 88 (FKVL…YWVM).

Belongs to the cytochrome c oxidase bacterial subunit 4 family.

It is found in the cell membrane. The catalysed reaction is 2 a quinol + O2 = 2 a quinone + 2 H2O. Its function is as follows. Catalyzes quinol oxidation with the concomitant reduction of oxygen to water. This is Probable quinol oxidase subunit 4 (qoxD) from Staphylococcus saprophyticus subsp. saprophyticus (strain ATCC 15305 / DSM 20229 / NCIMB 8711 / NCTC 7292 / S-41).